A 456-amino-acid polypeptide reads, in one-letter code: tRNA modification GTPase MnmE (456 aa).

Arg26, Glu86, and Arg125 together coordinate (6S)-5-formyl-5,6,7,8-tetrahydrofolate. The 155-residue stretch at 222 to 376 folds into the TrmE-type G domain; the sequence is GLSTAIIGRP…IEDRINQLFF (155 aa). Position 232 (Asn232) interacts with K(+). GTP contacts are provided by residues 232 to 237, 251 to 257, and 276 to 279; these read NVGKSS, TDIEGTT, and DTAG. Ser236 is a Mg(2+) binding site. K(+)-binding residues include Thr251, Ile253, and Thr256. Thr257 is a Mg(2+) binding site. Lys456 lines the (6S)-5-formyl-5,6,7,8-tetrahydrofolate pocket.

Belongs to the TRAFAC class TrmE-Era-EngA-EngB-Septin-like GTPase superfamily. TrmE GTPase family. As to quaternary structure, homodimer. Heterotetramer of two MnmE and two MnmG subunits. Requires K(+) as cofactor.

The protein localises to the cytoplasm. In terms of biological role, exhibits a very high intrinsic GTPase hydrolysis rate. Involved in the addition of a carboxymethylaminomethyl (cmnm) group at the wobble position (U34) of certain tRNAs, forming tRNA-cmnm(5)s(2)U34. The protein is tRNA modification GTPase MnmE of Streptococcus thermophilus (strain CNRZ 1066).